The chain runs to 185 residues: Ribosome maturation factor RimM (185 aa).

The 76-residue stretch at 96–171 folds into the PRC barrel domain; sequence EDEFYHSDLL…VITIDPPEDV (76 aa). The segment at 165–185 is disordered; the sequence is IDPPEDVGSKAEEEGGGAPDD.

It belongs to the RimM family. As to quaternary structure, binds ribosomal protein uS19.

Its subcellular location is the cytoplasm. Its function is as follows. An accessory protein needed during the final step in the assembly of 30S ribosomal subunit, possibly for assembly of the head region. Essential for efficient processing of 16S rRNA. May be needed both before and after RbfA during the maturation of 16S rRNA. It has affinity for free ribosomal 30S subunits but not for 70S ribosomes. The protein is Ribosome maturation factor RimM of Maricaulis maris (strain MCS10) (Caulobacter maris).